The primary structure comprises 67 residues: Kappa-conotoxin-like 1 (67 aa).

Positions 1 to 26 (MMFRLTSVSCFLLVIACLNLFQVVLT) are cleaved as a signal peptide. 4 disulfide bridges follow: cysteine 29–cysteine 43, cysteine 36–cysteine 48, cysteine 42–cysteine 51, and cysteine 47–cysteine 55. Isoleucine amide is present on isoleucine 59. Residues 63–67 (ATFQE) constitute a propeptide that is removed on maturation.

This sequence belongs to the conotoxin I2 superfamily. In terms of tissue distribution, expressed by the venom duct.

It localises to the secreted. In terms of biological role, inhibits the vertebrate voltage-gated potassium channels Kv1.1/KCNA1 and Kv1.3/KCNA3. This is Kappa-conotoxin-like 1 from Conus vexillum (Flag cone).